We begin with the raw amino-acid sequence, 193 residues long: Peptidyl-tRNA hydrolase (193 aa).

Tyrosine 16 serves as a coordination point for tRNA. Histidine 21 functions as the Proton acceptor in the catalytic mechanism. Residues tyrosine 66, asparagine 68, and asparagine 114 each contribute to the tRNA site.

It belongs to the PTH family. In terms of assembly, monomer.

Its subcellular location is the cytoplasm. The enzyme catalyses an N-acyl-L-alpha-aminoacyl-tRNA + H2O = an N-acyl-L-amino acid + a tRNA + H(+). Functionally, hydrolyzes ribosome-free peptidyl-tRNAs (with 1 or more amino acids incorporated), which drop off the ribosome during protein synthesis, or as a result of ribosome stalling. In terms of biological role, catalyzes the release of premature peptidyl moieties from peptidyl-tRNA molecules trapped in stalled 50S ribosomal subunits, and thus maintains levels of free tRNAs and 50S ribosomes. This Geobacter sulfurreducens (strain ATCC 51573 / DSM 12127 / PCA) protein is Peptidyl-tRNA hydrolase.